We begin with the raw amino-acid sequence, 622 residues long: Threonine--tRNA ligase (622 aa).

The segment at 1-141 (MKTLLIHSDY…SRKITTERKE (141 aa)) is editing domain. The interval 199–498 (PHVKYIKEKE…TLENKPPALP (300 aa)) is catalytic. Zn(2+)-binding residues include cysteine 291, histidine 343, and histidine 467.

It belongs to the class-II aminoacyl-tRNA synthetase family. Homodimer. The cofactor is Zn(2+).

It is found in the cytoplasm. The enzyme catalyses tRNA(Thr) + L-threonine + ATP = L-threonyl-tRNA(Thr) + AMP + diphosphate + H(+). In terms of biological role, catalyzes the attachment of threonine to tRNA(Thr) in a two-step reaction: L-threonine is first activated by ATP to form Thr-AMP and then transferred to the acceptor end of tRNA(Thr). Also edits incorrectly charged L-seryl-tRNA(Thr). The chain is Threonine--tRNA ligase from Methanococcus maripaludis (strain C7 / ATCC BAA-1331).